Reading from the N-terminus, the 101-residue chain is Putative metal transport protein HQ_3622A (101 aa).

The N-terminal stretch at 1-32 (MKIISMSMDSWIQRAALMLLGLVIVAPFFGWT) is a signal peptide. The chain crosses the membrane as a helical span at residues 75–95 (IGTLISAGVGTVLTLIVAFGA).

The protein resides in the cell membrane. Functionally, may be involved in metal transport. The polypeptide is Putative metal transport protein HQ_3622A (Haloquadratum walsbyi (strain DSM 16790 / HBSQ001)).